The sequence spans 417 residues: NADH-quinone oxidoreductase subunit D (417 aa).

This sequence belongs to the complex I 49 kDa subunit family. In terms of assembly, NDH-1 is composed of 14 different subunits. Subunits NuoB, C, D, E, F, and G constitute the peripheral sector of the complex.

The protein resides in the cell inner membrane. It catalyses the reaction a quinone + NADH + 5 H(+)(in) = a quinol + NAD(+) + 4 H(+)(out). In terms of biological role, NDH-1 shuttles electrons from NADH, via FMN and iron-sulfur (Fe-S) centers, to quinones in the respiratory chain. The immediate electron acceptor for the enzyme in this species is believed to be ubiquinone. Couples the redox reaction to proton translocation (for every two electrons transferred, four hydrogen ions are translocated across the cytoplasmic membrane), and thus conserves the redox energy in a proton gradient. This chain is NADH-quinone oxidoreductase subunit D, found in Legionella pneumophila subsp. pneumophila (strain Philadelphia 1 / ATCC 33152 / DSM 7513).